The chain runs to 406 residues: Tyrosine--tRNA ligase (406 aa).

Residue Y35 coordinates L-tyrosine. Positions 40–49 (PTADSLHVGH) match the 'HIGH' region motif. Residues Y168 and Q172 each contribute to the L-tyrosine site. Positions 228–232 (KMGKT) match the 'KMSKS' region motif. Position 231 (K231) interacts with ATP. The S4 RNA-binding domain occupies 340-404 (LPILDVMAST…RGKKNYNKIE (65 aa)).

This sequence belongs to the class-I aminoacyl-tRNA synthetase family. TyrS type 1 subfamily. Homodimer.

The protein resides in the cytoplasm. The enzyme catalyses tRNA(Tyr) + L-tyrosine + ATP = L-tyrosyl-tRNA(Tyr) + AMP + diphosphate + H(+). Catalyzes the attachment of tyrosine to tRNA(Tyr) in a two-step reaction: tyrosine is first activated by ATP to form Tyr-AMP and then transferred to the acceptor end of tRNA(Tyr). This is Tyrosine--tRNA ligase from Clostridium beijerinckii (strain ATCC 51743 / NCIMB 8052) (Clostridium acetobutylicum).